The following is a 162-amino-acid chain: Regulator of sigma D (162 aa).

The protein belongs to the Rsd/AlgQ family. In terms of assembly, interacts with RpoD.

It localises to the cytoplasm. Binds RpoD and negatively regulates RpoD-mediated transcription activation by preventing the interaction between the primary sigma factor RpoD with the catalytic core of the RNA polymerase and with promoter DNA. May be involved in replacement of the RNA polymerase sigma subunit from RpoD to RpoS during the transition from exponential growth to the stationary phase. The polypeptide is Regulator of sigma D (Salmonella agona (strain SL483)).